A 572-amino-acid polypeptide reads, in one-letter code: Methionine--tRNA ligase (572 aa).

The short motif at 11 to 21 (PYINGIKHLGN) is the 'HIGH' region element. Zn(2+) contacts are provided by Cys143, Cys146, Cys156, and Cys159. The short motif at 346–350 (QFSTS) is the 'KMSKS' region element. Thr349 provides a ligand contact to ATP.

It belongs to the class-I aminoacyl-tRNA synthetase family. MetG type 1 subfamily. Monomer. It depends on Zn(2+) as a cofactor.

It localises to the cytoplasm. The enzyme catalyses tRNA(Met) + L-methionine + ATP = L-methionyl-tRNA(Met) + AMP + diphosphate. In terms of biological role, is required not only for elongation of protein synthesis but also for the initiation of all mRNA translation through initiator tRNA(fMet) aminoacylation. The chain is Methionine--tRNA ligase from Ruegeria pomeroyi (strain ATCC 700808 / DSM 15171 / DSS-3) (Silicibacter pomeroyi).